We begin with the raw amino-acid sequence, 588 residues long: Ribonuclease Y (588 aa).

A helical transmembrane segment spans residues 7-27 (VLLVAVLLLTVVVVGAVLVGV). A KH domain is found at 278 to 359 (VVSVLHLPGD…HRIEEVHDLA (82 aa)). The region spanning 404 to 497 (VLKHLVESAH…TQASDACSGG (94 aa)) is the HD domain.

The protein belongs to the RNase Y family.

The protein localises to the cell membrane. In terms of biological role, endoribonuclease that initiates mRNA decay. This chain is Ribonuclease Y, found in Salinispora tropica (strain ATCC BAA-916 / DSM 44818 / JCM 13857 / NBRC 105044 / CNB-440).